A 424-amino-acid chain; its full sequence is Phosphomethylpyrimidine synthase (424 aa).

Residues asparagine 66, methionine 95, tyrosine 124, histidine 163, 185–187 (SRG), 226–229 (DGMR), and glutamate 265 each bind substrate. Histidine 269 provides a ligand contact to Zn(2+). Phenylalanine 292 serves as a coordination point for substrate. A Zn(2+)-binding site is contributed by histidine 333. 3 residues coordinate [4Fe-4S] cluster: cysteine 408, cysteine 411, and cysteine 415.

It belongs to the ThiC family. [4Fe-4S] cluster serves as cofactor.

The catalysed reaction is 5-amino-1-(5-phospho-beta-D-ribosyl)imidazole + S-adenosyl-L-methionine = 4-amino-2-methyl-5-(phosphooxymethyl)pyrimidine + CO + 5'-deoxyadenosine + formate + L-methionine + 3 H(+). Its pathway is cofactor biosynthesis; thiamine diphosphate biosynthesis. In terms of biological role, catalyzes the synthesis of the hydroxymethylpyrimidine phosphate (HMP-P) moiety of thiamine from aminoimidazole ribotide (AIR) in a radical S-adenosyl-L-methionine (SAM)-dependent reaction. This Thermotoga petrophila (strain ATCC BAA-488 / DSM 13995 / JCM 10881 / RKU-1) protein is Phosphomethylpyrimidine synthase.